Here is a 327-residue protein sequence, read N- to C-terminus: Malate dehydrogenase (327 aa).

12–18 (GAAGQIG) contributes to the NAD(+) binding site. Positions 93 and 99 each coordinate substrate. NAD(+) is bound by residues Asn106, Gln113, and 130 to 132 (VGN). Asn132 and Arg163 together coordinate substrate. The Proton acceptor role is filled by His188.

It belongs to the LDH/MDH superfamily. MDH type 2 family.

It catalyses the reaction (S)-malate + NAD(+) = oxaloacetate + NADH + H(+). Catalyzes the reversible oxidation of malate to oxaloacetate. In Cupriavidus necator (strain ATCC 17699 / DSM 428 / KCTC 22496 / NCIMB 10442 / H16 / Stanier 337) (Ralstonia eutropha), this protein is Malate dehydrogenase.